Reading from the N-terminus, the 433-residue chain is LanC-like protein GCL1 (433 aa).

Positions 1–22 (MSSSVDFVTEQGRCGDDGNGAG) are disordered.

The protein belongs to the LanC-like protein family.

Its function is as follows. May play a role in signaling. May be not involved in abscisic acid (ABA) signaling. In Arabidopsis thaliana (Mouse-ear cress), this protein is LanC-like protein GCL1 (GCL1).